Reading from the N-terminus, the 76-residue chain is Brevinin-2ISa (76 aa).

The signal sequence occupies residues methionine 1 to cysteine 22. Positions glutamate 23–valine 41 are cleaved as a propeptide — removed in mature form. Cysteine 70 and cysteine 76 are joined by a disulfide.

As to expression, expressed by the skin glands.

It localises to the secreted. In terms of biological role, has antimicrobial activity against Gram-negative bacterium E.coli ATCC 8739 (MIC=50 ug), against Gram positive bacteria S.aureus ATCC 6538 (MIC=12.5 ug), methicillin-resistant S.aureus ATCC 43300 (MIC=100 ug) and B.subtilis ATCC 6633 (MIC=12.5 ug). Has no activity against fungus C.albicans ATCC 90028. The protein is Brevinin-2ISa of Odorrana ishikawae (Ishikawa's frog).